The primary structure comprises 505 residues: Alpha-1-syntrophin (505 aa).

2 disordered regions span residues 1–25 (MASG…GAGG) and 40–77 (LTVS…PPQL). PH domains follow at residues 6 to 269 (RAPR…AQVN) and 293 to 401 (DIKQ…DGCH). Positions 87 to 170 (RVTVRKADAG…EVVLEVKYMK (84 aa)) constitute a PDZ domain. Phosphoserine occurs at positions 101, 184, 189, 193, and 200. The tract at residues 180 to 210 (TGGTSVGWDSPPASPLQRQPSSPGPTPRNFS) is disordered. The SU domain maps to 449–505 (PFEKLQMSSDDGASLLFLDFGGAEGEIQLDLHSCPKTIVFIIHSFLSAKVTRLGLLA). Residues 483–505 (PKTIVFIIHSFLSAKVTRLGLLA) form a calmodulin-binding region.

The protein belongs to the syntrophin family. As to quaternary structure, monomer and homodimer. Interacts with the other members of the syntrophin family SNTB1 and SNTB2; SGCG and SGCA of the dystrophin glycoprotein complex; NOS1; GRB2; the sodium channel proteins SCN4A and SCN5A; F-actin and calmodulin. Interacts with dystrophin protein DMD and related proteins DTNA and UTRN and with MAPK12, TGFA and GA. Interacts with MYOC; regulates muscle hypertrophy. Interacts with DTNB. Post-translationally, phosphorylated by CaM-kinase II. Phosphorylation may inhibit the interaction with DMD. As to expression, high expression in skeletal muscle and heart. Low expression in brain, pancreas, liver, kidney and lung. Not detected in placenta.

It localises to the cell membrane. The protein localises to the sarcolemma. It is found in the cell junction. The protein resides in the cytoplasm. Its subcellular location is the cytoskeleton. Functionally, adapter protein that binds to and probably organizes the subcellular localization of a variety of membrane proteins. May link various receptors to the actin cytoskeleton and the extracellular matrix via the dystrophin glycoprotein complex. Plays an important role in synapse formation and in the organization of UTRN and acetylcholine receptors at the neuromuscular synapse. Binds to phosphatidylinositol 4,5-bisphosphate. The protein is Alpha-1-syntrophin (SNTA1) of Homo sapiens (Human).